A 342-amino-acid polypeptide reads, in one-letter code: Putative glycosyltransferases (342 aa).

2 helical membrane-spanning segments follow: residues I227–I247 and V262–I282.

Belongs to the glycosyltransferase 2 family.

Its subcellular location is the cell membrane. In terms of biological role, may play only a redundant role in maintaining cell wall viability and bacterial virulence. This chain is Putative glycosyltransferases (pimF), found in Mycobacterium tuberculosis (strain CDC 1551 / Oshkosh).